Reading from the N-terminus, the 193-residue chain is Anthranilate synthase component 2 (193 aa).

One can recognise a Glutamine amidotransferase type-1 domain in the interval 3–193 (DILLLDNVDS…EQTLAWALAK (191 aa)). 57–59 (GPG) lines the L-glutamine pocket. Residue C84 is the Nucleophile; for GATase activity of the active site. L-glutamine is bound by residues Q88 and 134-135 (SL). Active-site for GATase activity residues include H170 and E172.

In terms of assembly, heterotetramer consisting of two non-identical subunits: a beta subunit (TrpG) and a large alpha subunit (TrpE).

The catalysed reaction is chorismate + L-glutamine = anthranilate + pyruvate + L-glutamate + H(+). It functions in the pathway amino-acid biosynthesis; L-tryptophan biosynthesis; L-tryptophan from chorismate: step 1/5. In terms of biological role, part of a heterotetrameric complex that catalyzes the two-step biosynthesis of anthranilate, an intermediate in the biosynthesis of L-tryptophan. In the first step, the glutamine-binding beta subunit (TrpG) of anthranilate synthase (AS) provides the glutamine amidotransferase activity which generates ammonia as a substrate that, along with chorismate, is used in the second step, catalyzed by the large alpha subunit of AS (TrpE) to produce anthranilate. In the absence of TrpG, TrpE can synthesize anthranilate directly from chorismate and high concentrations of ammonia. The polypeptide is Anthranilate synthase component 2 (trpG) (Serratia marcescens).